Reading from the N-terminus, the 645-residue chain is TBC1 domain family member 17 (645 aa).

Residues Pro-57 to Glu-85 are disordered. The required for interaction with OPTN stretch occupies residues Asp-217–Gly-309. The 211-residue stretch at Gly-310–Leu-520 folds into the Rab-GAP TBC domain. The tract at residues Gln-596–Ala-645 is disordered. Positions Pro-600–Pro-624 are enriched in pro residues. 3 positions are modified to phosphoserine: Ser-602, Ser-604, and Ser-608. A Phosphothreonine modification is found at Thr-615.

As to quaternary structure, interacts with OPTN; this interaction mediates TBC1D17 transient association with Rab8.

The protein localises to the cytoplasmic vesicle. It localises to the autophagosome. It is found in the cytoplasm. The protein resides in the recycling endosome. Functionally, probable GTPase-activating protein that inhibits RAB8A/B function. Reduces Rab8 recruitment to tubules emanating from the endocytic recycling compartment (ERC) and inhibits Rab8-mediated endocytic trafficking, such as that of transferrin receptor (TfR). Involved in regulation of autophagy. The chain is TBC1 domain family member 17 (Tbc1d17) from Mus musculus (Mouse).